The following is a 2922-amino-acid chain: Small ribosomal subunit protein uS4c (2922 aa).

An S4 RNA-binding domain is found at 111–174; sequence MRLDNIVFRL…ISMELVSRFL (64 aa).

This sequence belongs to the universal ribosomal protein uS4 family. In terms of assembly, part of the 30S ribosomal subunit. Contacts protein S5. The interaction surface between S4 and S5 is involved in control of translational fidelity.

The protein resides in the plastid. It localises to the chloroplast. One of the primary rRNA binding proteins, it binds directly to 16S rRNA where it nucleates assembly of the body of the 30S subunit. Functionally, with S5 and S12 plays an important role in translational accuracy. The chain is Small ribosomal subunit protein uS4c (rps4) from Stigeoclonium helveticum (Green alga).